Here is a 493-residue protein sequence, read N- to C-terminus: Transmembrane protein 145 (493 aa).

A helical transmembrane segment spans residues 9–29 (LRRLLPPLLLLLLSLPPRARA). The N-linked (GlcNAc...) asparagine glycan is linked to asparagine 35. The next 7 membrane-spanning stretches (helical) occupy residues 175–195 (VTFL…GYLL), 207–227 (MFMA…IYWG), 241–261 (ILAK…LILL), 282–302 (VYMT…AEFF), 318–338 (GLIG…LVSL), 349–369 (VPFF…ALIA), and 381–401 (IVNG…LIMT). N-linked (GlcNAc...) asparagine glycosylation is present at asparagine 444. Residues 464–493 (PATSPLPRAAPDSGLPLFRDLRPPGPLRDL) are disordered.

It is found in the membrane. The protein is Transmembrane protein 145 (TMEM145) of Homo sapiens (Human).